Consider the following 79-residue polypeptide: MASDRQNLQDAFLNHVRKTKVPVTIFLINGVKLQGVITWFDNFCVLLRRDGQSQLVYKHAISTIMPAQPISLYEGEDSN.

The region spanning 10 to 70 is the Sm domain; that stretch reads DAFLNHVRKT…ISTIMPAQPI (61 aa).

Belongs to the Hfq family. As to quaternary structure, homohexamer.

Functionally, RNA chaperone that binds small regulatory RNA (sRNAs) and mRNAs to facilitate mRNA translational regulation in response to envelope stress, environmental stress and changes in metabolite concentrations. Also binds with high specificity to tRNAs. The polypeptide is RNA-binding protein Hfq (Ruegeria sp. (strain TM1040) (Silicibacter sp.)).